A 310-amino-acid chain; its full sequence is Zinc finger CCCH domain-containing protein 14 (310 aa).

Positions 56–75 (ESLSPSPPSSSSPPSRVDTT) are disordered. The stretch at 84–129 (KLILEYDELNEHYELCLNRLQSLMTELDSLRHENDSLRFENSDLLK) forms a coiled coil. Over residues 155–167 (QISDSRSAKRNNQ) the composition is skewed to basic and acidic residues. The interval 155-174 (QISDSRSAKRNNQERNSLPK) is disordered. 2 C3H1-type zinc fingers span residues 232-260 (MMKT…HGID) and 270-298 (RYKT…HSLT).

In terms of tissue distribution, highly expressed in secondary cell wall-forming tissues and the xylem cells of roots. Expressed predominantly in inflorescence stems, flowers and siliques. Highly expressed in the basal portion of stems, where cells are undergoing secondary cell wall thickening.

Functionally, functions probably as a transcriptional factor that activates genes involved in secondary cell wall biosynthesis. May play a role in both transcriptional and post-transcriptional regulation. Binds to ssDNA, dsDNA, and ribohomopolymers in vitro. Maybe involved in post-transcriptional regulation of its target genes. Targets RNA of a polygalacturonase, a well-known cell wall modifying gene. Functions redudantly with C3H15 to regulate secondary cell wall formation. C3H14 and C3H15 have overlapping roles in the regulation of secondary cell wall formation and anther development. C3H14 may contribute more to secondary cell wall thickening while C3H15 could be more important in anther development. May regulate at both the transcriptional and post-transcriptional levels the expression of many genes involved in various biological processes, particularly those associated with cell wall metabolism and pollen development. This chain is Zinc finger CCCH domain-containing protein 14, found in Arabidopsis thaliana (Mouse-ear cress).